We begin with the raw amino-acid sequence, 1070 residues long: Alpha-glucosidase (1070 aa).

A signal peptide spans 1–35; the sequence is MRSIKAASLTPLLAALFTTLSSTLALPSSVWEHQL. 9 N-linked (GlcNAc...) asparagine glycosylation sites follow: asparagine 48, asparagine 99, asparagine 144, asparagine 161, asparagine 208, asparagine 384, asparagine 458, asparagine 480, and asparagine 513. Aspartate 526 (nucleophile) is an active-site residue. Residue glutamate 529 is part of the active site. 5 N-linked (GlcNAc...) asparagine glycosylation sites follow: asparagine 544, asparagine 566, asparagine 574, asparagine 578, and asparagine 635. Aspartate 730 serves as the catalytic Proton donor. 10 N-linked (GlcNAc...) asparagine glycosylation sites follow: asparagine 818, asparagine 885, asparagine 916, asparagine 983, asparagine 992, asparagine 996, asparagine 1008, asparagine 1029, asparagine 1043, and asparagine 1052.

Belongs to the glycosyl hydrolase 31 family.

The catalysed reaction is Hydrolysis of terminal, non-reducing (1-&gt;4)-linked alpha-D-glucose residues with release of alpha-D-glucose.. In terms of biological role, hydrolyzes a broad range of alpha-D-linked glucopyranosides, including maltose (alpha-1,4), sucrose (alpha-1,2), isomaltose (alpha-1,6) and turanose (alpha-1,3). The sequence is that of Alpha-glucosidase from Candida tsukubaensis (Yeast).